The primary structure comprises 620 residues: Chaperone protein HtpG (620 aa).

The a; substrate-binding stretch occupies residues 1-339 (MAKHQFQTEI…SEDLPLNVSR (339 aa)). Residues 340-546 (ELLQENRILA…ASDPMAGMAA (207 aa)) are b. Positions 547–620 (MFAQMGQEMP…RVASLATKAL (74 aa)) are c.

It belongs to the heat shock protein 90 family. As to quaternary structure, homodimer.

It is found in the cytoplasm. Its function is as follows. Molecular chaperone. Has ATPase activity. The chain is Chaperone protein HtpG from Sulfurovum sp. (strain NBC37-1).